The primary structure comprises 425 residues: Sodium-dependent glucose transporter 1A (425 aa).

11 helical membrane-spanning segments follow: residues 35-55 (LIFV…GVLF), 61-81 (FFLL…IPFC), 84-104 (AVLL…VDTG), 123-143 (ALHF…KLAW), 183-203 (WAYA…FGLF), 228-248 (ALLC…ITYG), 271-291 (SIFW…ATFL), 294-314 (GTMI…LVLF), 320-340 (CLWI…PSGI), 355-375 (AFFV…IGIL), and 382-402 (LPVV…LFPV).

Belongs to the major facilitator superfamily.

Its subcellular location is the apical cell membrane. May function as a sodium-dependent glucose transporter. Potential channels for urea in the inner medulla of kidney. This chain is Sodium-dependent glucose transporter 1A, found in Mus musculus (Mouse).